A 479-amino-acid polypeptide reads, in one-letter code: Preferentially expressed antigen in melanoma-like protein 7 (479 aa).

One copy of the LRR 1; degenerate repeat lies at 96–124 (MGRLKKVDFRDAQHHASLDMQDEREGRDY). Residues 179-203 (HLCCEKLEIGAVEVSKVRNVLKFLQ) form an LRR 2; degenerate repeat. Residues 204-230 (PELIKELKLNTVGNLSKLAKFVPFIRK) form an LRR 3; degenerate repeat. The stretch at 231 to 265 (MRNLQKLMLVRTFGTRTFTQEEKQNISKIISLFCK) is one LRR 4; degenerate repeat. LRR repeat units follow at residues 266–291 (LSCL…LRCL), 292–323 (EAPL…SQLK), 324–347 (HLCL…LKRV), 348–375 (AANL…ALIK), and 376–400 (CTQL…FLHR).

This sequence belongs to the PRAME family. As to quaternary structure, interacts with UHRF1. In terms of tissue distribution, seems to be specific to pluripotent tissues in the early embryo. Not detected in somatic tissues.

Its function is as follows. Promotes maintenance and self-renewal of pluripotent embryonic stem cells (ESCs), downstream of LIF/STAT3. Maintains the pluripotency state of ESCs by repressing DNA methylation through the regulation of UHRF1 stability. Mediates the proteasomal degradation of UHRF1. Is required for the establishment of the blastocyst. The sequence is that of Preferentially expressed antigen in melanoma-like protein 7 from Mus musculus (Mouse).